A 137-amino-acid chain; its full sequence is Ribosome-binding factor A (137 aa).

This sequence belongs to the RbfA family. As to quaternary structure, monomer. Binds 30S ribosomal subunits, but not 50S ribosomal subunits or 70S ribosomes.

It localises to the cytoplasm. Functionally, one of several proteins that assist in the late maturation steps of the functional core of the 30S ribosomal subunit. Associates with free 30S ribosomal subunits (but not with 30S subunits that are part of 70S ribosomes or polysomes). Required for efficient processing of 16S rRNA. May interact with the 5'-terminal helix region of 16S rRNA. The chain is Ribosome-binding factor A from Nitrobacter hamburgensis (strain DSM 10229 / NCIMB 13809 / X14).